The chain runs to 508 residues: D-alanine--D-alanyl carrier protein ligase (508 aa).

Position 152–153 (152–153) interacts with ATP; the sequence is TS. A D-alanine-binding site is contributed by Asp198. An ATP-binding site is contributed by 293–298; sequence NTYGPT. Val302 is a binding site for D-alanine. ATP is bound by residues Asp384, 396–399, and Lys495; that span reads YRGR. Lys495 contributes to the D-alanine binding site.

It belongs to the ATP-dependent AMP-binding enzyme family. DltA subfamily.

The protein resides in the cytoplasm. The catalysed reaction is holo-[D-alanyl-carrier protein] + D-alanine + ATP = D-alanyl-[D-alanyl-carrier protein] + AMP + diphosphate. It functions in the pathway cell wall biogenesis; lipoteichoic acid biosynthesis. In terms of biological role, catalyzes the first step in the D-alanylation of lipoteichoic acid (LTA), the activation of D-alanine and its transfer onto the D-alanyl carrier protein (Dcp) DltC. In an ATP-dependent two-step reaction, forms a high energy D-alanyl-AMP intermediate, followed by transfer of the D-alanyl residue as a thiol ester to the phosphopantheinyl prosthetic group of the Dcp. D-alanylation of LTA plays an important role in modulating the properties of the cell wall in Gram-positive bacteria, influencing the net charge of the cell wall. In Lactiplantibacillus plantarum (strain ATCC BAA-793 / NCIMB 8826 / WCFS1) (Lactobacillus plantarum), this protein is D-alanine--D-alanyl carrier protein ligase.